Consider the following 709-residue polypeptide: SH3 domain-containing kinase-binding protein 1 (709 aa).

SH3 domains lie at 1-58 and 98-157; these read MVEA…EIKK and RRRR…ELSG. A phosphoserine mark is found at serine 156, serine 159, serine 227, and serine 274. The span at 221 to 239 shows a compositional bias: low complexity; sequence ETTGSESDGGDSSSTKSEG. Residues 221-242 are disordered; sequence ETTGSESDGGDSSSTKSEGANG. Disordered stretches follow at residues 289-309, 372-485, and 511-650; these read GKKL…MDSR, SDFD…KIDL, and DSVI…VSSQ. At threonine 298 the chain carries Phosphothreonine. The region spanning 311-372 is the SH3 3 domain; the sequence is KTKDYCKVIF…PDNFVKLLPS (62 aa). The span at 399–434 shows a compositional bias: basic and acidic residues; the sequence is TERKHEIKKIPPERPETLPNRTEEKERPEREPKLDL. Serine 480 bears the Phosphoserine mark. A compositionally biased stretch (polar residues) spans 513-528; sequence VISSTEKLSHPTTSRP. The segment covering 535 to 554 has biased composition (low complexity); it reads PPSQSLTSSSLSSPDIFDSP. A phosphoserine mark is found at serine 553, serine 555, and serine 565. The segment covering 561–575 has biased composition (basic and acidic residues); sequence EEHISLAHRGIDVSK. Residues 579-592 are compositionally biased toward polar residues; it reads KTVTISQVSDNKTS. Over residues 600-623 the composition is skewed to low complexity; it reads MAAASSGPASLSSVASSPMSSSLG. A compositionally biased stretch (polar residues) spans 627–636; the sequence is QRASSPSLFS. Serine 631 carries the post-translational modification Phosphoserine. The stretch at 646–708 forms a coiled coil; the sequence is AVSSQAAIEE…VNDIKKALQS (63 aa).

Can self-associate and form homotetramers. Interacts with CD2, F-actin capping protein, PIK3R3, GRB2, EGFR, MET, BLNK, MAP3K4, PDCD6IP, SPRY2, ARHGAP17, ARHGAP27, CRK, BCAR1, SOS1, ASAP1, ARAP3, HIP1R, SYNJ2, INPP5D and STAP1. Interacts with E3 ubiquitin-protein ligase CBL. Interacts with CBLB, but does not interact with CBLC. Two molecules of SH3KBP1 seem to bind through their respective SH3 1 domain to one molecule of CBLB. The interaction with CBL or CBLB and EGFR is increased upon EGF stimulation. The interaction with CBL is attenuated by PDCD6IP. Interacts (via SH3 domains) with ARAP1. The interaction is independent of EGF and does not affect ARAP1 GTPase-activating activity but is involved in regulating ubiquitination and endocytic trafficking of EGFR. ARAP1 competes with CBL for binding to SH3KBP1 and prevents interaction of CBL with SH3KBP1; this is likely to regulate SH3KBP1-mediated internalization of EGFR. Interacts through its proline-rich region with the SH3 domain of endophilins SH3GL1, SH3GL2 and SH3GL3. The SH3KBP1-endophilin complex seems to associate with a complex containing the phosphorylated receptor (EGFR or MET) and phosphorylated CBL. Probably associates with ASAP1 and phosphorylated EGFR. Probably part of a complex consisting of at least SH3KBP1, ASAP1 and ARAP3. Interacts with focal adhesion kinases PTK2/FAK1 and PTK2B/PYK2, probably as a dimer. Interacts with DAB2 and probably associates with chathrin through its interaction with DAB2. Part of a complex consisting of SH3KBP1, DAB2, and clathrin heavy chain. DAB2 and clathrin dissociate from SH3KBP1 following growth factor treatment, enabling interaction with CBL. Interacts with DDN and probably associates with MAGI2 through its interaction with DDN. Interacts with the SH3 domains of SRC tyrosine-protein kinases SRC, LCK, LYN, FGR, FYN and HCK. Interacts with TRADD, BIRC2, TRAF1, TRAF2 and TNFR1, and the association with a TNFR1-associated complex upon stimulation with TNF-alpha seems to be mediated by SRC. Probably part of a complex consisting of at least SH3KBP1, ASAP1 and ARAP3. Interacts (via SH3 domains) with SHKBP1 (via PXXXPR motifs). Interacts with ATX2. Interaction with CBL is abolished in the presence of SHKBP1. Interacts (via SH3 domains) with ZFP36 (via extreme C-terminal region). Interacts with MAP3K4; this interaction enhances the association with ZFP36. In terms of processing, monoubiquitinated by CBL and CBLB after EGF stimulation; probably on its C-terminus.

It localises to the cytoplasm. The protein resides in the cytoskeleton. It is found in the cytoplasmic vesicle membrane. Its subcellular location is the synapse. The protein localises to the synaptosome. It localises to the cell junction. The protein resides in the focal adhesion. Adapter protein involved in regulating diverse signal transduction pathways. Involved in the regulation of endocytosis and lysosomal degradation of ligand-induced receptor tyrosine kinases, including EGFR and MET/hepatocyte growth factor receptor, through an association with CBL and endophilins. The association with CBL, and thus the receptor internalization, may be inhibited by an interaction with PDCD6IP and/or SPRY2. Involved in regulation of ligand-dependent endocytosis of the IgE receptor. Attenuates phosphatidylinositol 3-kinase activity by interaction with its regulatory subunit. May be involved in regulation of cell adhesion; promotes the interaction between TTK2B and PDCD6IP. May be involved in the regulation of cellular stress response via the MAPK pathways through its interaction with MAP3K4. Is involved in modulation of tumor necrosis factor mediated apoptosis. Plays a role in the regulation of cell morphology and cytoskeletal organization. Required in the control of cell shape and migration. Has an essential role in the stimulation of B cell activation. The sequence is that of SH3 domain-containing kinase-binding protein 1 (Sh3kbp1) from Mus musculus (Mouse).